A 524-amino-acid polypeptide reads, in one-letter code: Probable cytosol aminopeptidase (524 aa).

Mn(2+)-binding residues include K288 and D293. K300 is an active-site residue. Mn(2+) is bound by residues D311, D370, and E372. R374 is an active-site residue.

Belongs to the peptidase M17 family. Requires Mn(2+) as cofactor.

Its subcellular location is the cytoplasm. It catalyses the reaction Release of an N-terminal amino acid, Xaa-|-Yaa-, in which Xaa is preferably Leu, but may be other amino acids including Pro although not Arg or Lys, and Yaa may be Pro. Amino acid amides and methyl esters are also readily hydrolyzed, but rates on arylamides are exceedingly low.. The catalysed reaction is Release of an N-terminal amino acid, preferentially leucine, but not glutamic or aspartic acids.. Functionally, presumably involved in the processing and regular turnover of intracellular proteins. Catalyzes the removal of unsubstituted N-terminal amino acids from various peptides. This is Probable cytosol aminopeptidase (pepA) from Mycobacterium leprae (strain TN).